Here is a 181-residue protein sequence, read N- to C-terminus: Acireductone dioxygenase (181 aa).

Positions 98, 100, 104, and 142 each coordinate Fe(2+). 4 residues coordinate Ni(2+): H98, H100, E104, and H142.

It belongs to the acireductone dioxygenase (ARD) family. Monomer. It depends on Fe(2+) as a cofactor. Ni(2+) is required as a cofactor.

The enzyme catalyses 1,2-dihydroxy-5-(methylsulfanyl)pent-1-en-3-one + O2 = 3-(methylsulfanyl)propanoate + CO + formate + 2 H(+). It catalyses the reaction 1,2-dihydroxy-5-(methylsulfanyl)pent-1-en-3-one + O2 = 4-methylsulfanyl-2-oxobutanoate + formate + 2 H(+). Its pathway is amino-acid biosynthesis; L-methionine biosynthesis via salvage pathway; L-methionine from S-methyl-5-thio-alpha-D-ribose 1-phosphate: step 5/6. Functionally, catalyzes 2 different reactions between oxygen and the acireductone 1,2-dihydroxy-3-keto-5-methylthiopentene (DHK-MTPene) depending upon the metal bound in the active site. Fe-containing acireductone dioxygenase (Fe-ARD) produces formate and 2-keto-4-methylthiobutyrate (KMTB), the alpha-ketoacid precursor of methionine in the methionine recycle pathway. Ni-containing acireductone dioxygenase (Ni-ARD) produces methylthiopropionate, carbon monoxide and formate, and does not lie on the methionine recycle pathway. The polypeptide is Acireductone dioxygenase (Synechococcus sp. (strain ATCC 27144 / PCC 6301 / SAUG 1402/1) (Anacystis nidulans)).